Consider the following 617-residue polypeptide: Vacuolar protein sorting-associated protein 33B (617 aa).

The protein belongs to the STXBP/unc-18/SEC1 family. In terms of assembly, interacts with vipas39. In terms of tissue distribution, widely expressed from 4 hours post-fertilization (hpf) to 24 hpf. At 48 hpf, localized to brain, retina, ear, liver and proximal intestine. This expression pattern is more pronounced at 72 hpf and persists through 5 days post-fertilization (dpf). At 3 dpf and 4 dpf, expression in the liver is predominantly in developing biliary epithelial cells. No expression detected in kidney or spinal cord.

It localises to the late endosome membrane. The protein localises to the lysosome membrane. Functionally, may play a role in vesicle-mediated protein trafficking to lysosomal compartments and in membrane docking/fusion reactions of late endosomes/lysosomes. Required for proper trafficking and targeting of the collagen-modifying enzyme lysyl hydroxylase 3 (LH3) to intracellular collagen. Mediates phagolysosomal fusion in macrophages. Proposed to be involved in endosomal maturation implicating vipas39. In epithelial cells, the vps33b:vipas39 complex may play a role in the apical recycling pathway and in the maintenance of the apical-basolateral polarity. Plays a role in bile duct development. The polypeptide is Vacuolar protein sorting-associated protein 33B (Danio rerio (Zebrafish)).